A 334-amino-acid polypeptide reads, in one-letter code: Holliday junction branch migration complex subunit RuvB (334 aa).

Positions 1–181 (MQDRLISGTE…FGIVQRLEFY (181 aa)) are large ATPase domain (RuvB-L). Residues I20, R21, G62, K65, T66, T67, 128–130 (EDY), R171, Y181, and R218 contribute to the ATP site. Position 66 (T66) interacts with Mg(2+). The small ATPAse domain (RuvB-S) stretch occupies residues 182–252 (SVEDLTHIVS…MAQRALDMLN (71 aa)). The tract at residues 255 to 334 (KAGLDTLDRR…FGMTPPEPKN (80 aa)) is head domain (RuvB-H). 2 residues coordinate DNA: R310 and R315.

This sequence belongs to the RuvB family. In terms of assembly, homohexamer. Forms an RuvA(8)-RuvB(12)-Holliday junction (HJ) complex. HJ DNA is sandwiched between 2 RuvA tetramers; dsDNA enters through RuvA and exits via RuvB. An RuvB hexamer assembles on each DNA strand where it exits the tetramer. Each RuvB hexamer is contacted by two RuvA subunits (via domain III) on 2 adjacent RuvB subunits; this complex drives branch migration. In the full resolvosome a probable DNA-RuvA(4)-RuvB(12)-RuvC(2) complex forms which resolves the HJ.

The protein resides in the cytoplasm. The enzyme catalyses ATP + H2O = ADP + phosphate + H(+). The RuvA-RuvB-RuvC complex processes Holliday junction (HJ) DNA during genetic recombination and DNA repair, while the RuvA-RuvB complex plays an important role in the rescue of blocked DNA replication forks via replication fork reversal (RFR). RuvA specifically binds to HJ cruciform DNA, conferring on it an open structure. The RuvB hexamer acts as an ATP-dependent pump, pulling dsDNA into and through the RuvAB complex. RuvB forms 2 homohexamers on either side of HJ DNA bound by 1 or 2 RuvA tetramers; 4 subunits per hexamer contact DNA at a time. Coordinated motions by a converter formed by DNA-disengaged RuvB subunits stimulates ATP hydrolysis and nucleotide exchange. Immobilization of the converter enables RuvB to convert the ATP-contained energy into a lever motion, pulling 2 nucleotides of DNA out of the RuvA tetramer per ATP hydrolyzed, thus driving DNA branch migration. The RuvB motors rotate together with the DNA substrate, which together with the progressing nucleotide cycle form the mechanistic basis for DNA recombination by continuous HJ branch migration. Branch migration allows RuvC to scan DNA until it finds its consensus sequence, where it cleaves and resolves cruciform DNA. The protein is Holliday junction branch migration complex subunit RuvB of Acinetobacter baumannii (strain AB307-0294).